We begin with the raw amino-acid sequence, 517 residues long: Variant surface glycoprotein MVAT5 (517 aa).

Residues 1-21 (MIGKAFIILSLLNELPTPTAA) form the signal peptide. 2 disulfides stabilise this stretch: Cys-417–Cys-430 and Cys-426–Cys-443. Residue Asn-435 is glycosylated (N-linked (GlcNAc...) asparagine). Residues 454–470 (QAAQTAGAGEGAAGTTT) are compositionally biased toward low complexity. A disordered region spans residues 454 to 487 (QAAQTAGAGEGAAGTTTDKCKDKKKDDCKSPDCK). Positions 471–487 (DKCKDKKKDDCKSPDCK) are enriched in basic and acidic residues. Asp-495 is lipidated: GPI-anchor amidated aspartate. The propeptide at 496-517 (SSILLNKQFALMVSAAFVALLF) is removed in mature form.

The protein localises to the cell membrane. Functionally, VSG forms a coat on the surface of the parasite. The trypanosome evades the immune response of the host by expressing a series of antigenically distinct VSGs from an estimated 1000 VSG genes. This is Variant surface glycoprotein MVAT5 from Trypanosoma brucei rhodesiense.